The sequence spans 852 residues: Disrupted in schizophrenia 1 homolog (852 aa).

Disordered regions lie at residues 1-86 (MQGG…GLDP), 236-264 (EAEPLHQRPQEMAAEASSSDRPHGDPRHL), and 280-320 (QVTR…QGGG). Residues 1–294 (MQGGGPRGAP…SSRQSECGTV (294 aa)) form an interaction with MAP1A region. Polar residues predominate over residues 65–79 (AGLTGQQSQHSQSKA). Basic and acidic residues predominate over residues 253–263 (SSDRPHGDPRH). Positions 288-311 (QSECGTVSSSSSDTGFSSQDASSA) are enriched in low complexity. Residues 295–693 (SSSSSDTGFS…LGRVWKADLE (399 aa)) form an interaction with TRAF3IP1 region. Coiled coils occupy residues 367 to 397 (EDGDYDTAETLRQRLEELEQEKGRLSWALPS) and 449 to 496 (ITRR…LLRW). The interval 437–594 (LRTTAQDSLP…LLEAKMLALS (158 aa)) is required for localization to punctate cytoplasmic foci. Positions 443–852 (DSLPASITRR…PTAGAQETEA (410 aa)) are necessary and sufficient for interaction with PCNT and localization at the centrosome. Residues 595 to 852 (GSCFSTAKEL…PTAGAQETEA (258 aa)) are interaction with ATF4 and ATF5. 2 disordered regions span residues 706–746 (EAGS…KSPL) and 833–852 (KEAGEASASYPTAGAQETEA). The segment at 728 to 852 (TAALAVPRTP…PTAGAQETEA (125 aa)) is interaction with NDEL1 and PAFAH1B1. The tract at residues 728-852 (TAALAVPRTP…PTAGAQETEA (125 aa)) is interaction with PAFAH1B1. Residues 802–835 (SHDEALFQSLQGELQTVKETLQAMILQLQPTKEA) are interaction with NDEL1.

As to quaternary structure, interacts with NDEL1. Interacts with CCDC88A (via C-terminus); the interaction is direct. Interacts with GSK3B. Interacts with tubulin alpha, ACTN2, ANKHD1, ATF4, ATF5, CEP63, EIF3S3, MAP1A, NDEL1, PAFAH1B1, RANBP9, SPTBN4, SYNE1 and TRAF3IP1. Interaction with microtubules may be mediated in part by TRAF3IP1. Interacts (via C-terminal) with PCNT. Interacts with CHCHD6. Interacts with CCDC141. Interacts with FBXW7, the substrate-recognition component of a SCF (SKP1-CUL1-F-box protein) E3 ubiquitin-protein ligase complex; the interaction targets DISC1 for proteasomal degradation. Interacts with ZNF365. Interacts with ATF4; inhibiting ATF4 transcription factor activity by disrupting ATF4 dimerization and DNA-binding. Interacts with PDE4B. In terms of processing, ubiquitinated. Ubiquitination with 'Lys-48'-linked polyubiquitin chains leads to its proteasomal degradation. As to expression, expressed in granule cell precursors within the dentate migratory stream during the first week of postnatal life and in differentiated granule cells of the hippocampus (at protein level). Detected in heart, brain, kidney, and testis. Expressed in dentate gyrus, hippocampus and in the olfactory bulb.

It is found in the cytoplasm. Its subcellular location is the cytoskeleton. The protein localises to the mitochondrion. The protein resides in the microtubule organizing center. It localises to the centrosome. It is found in the postsynaptic density. Functionally, involved in the regulation of multiple aspects of embryonic and adult neurogenesis. Required for neural progenitor proliferation in the ventrical/subventrical zone during embryonic brain development and in the adult dentate gyrus of the hippocampus. Participates in the Wnt-mediated neural progenitor proliferation as a positive regulator by modulating GSK3B activity and CTNNB1 abundance. Plays a role as a modulator of the AKT-mTOR signaling pathway controlling the tempo of the process of newborn neurons integration during adult neurogenesis, including neuron positioning, dendritic development and synapse formation. Inhibits the activation of AKT-mTOR signaling upon interaction with CCDC88A. Regulates the migration of early-born granule cell precursors toward the dentate gyrus during the hippocampal development. Inhibits ATF4 transcription factor activity in neurons by disrupting ATF4 dimerization and DNA-binding. Plays a role, together with PCNT, in the microtubule network formation. The chain is Disrupted in schizophrenia 1 homolog from Mus musculus (Mouse).